We begin with the raw amino-acid sequence, 515 residues long: Mucin-like protein Glc1.8a (515 aa).

An N-terminal signal peptide occupies residues 1–20 (MSQITLIILILAIGFSCTKS). Topologically, residues 21-467 (HPINSTRDGE…ANDIKKPAFP (447 aa)) are extracellular. N-linked (GlcNAc...) asparagine; by host glycosylation is found at Asn-24, Asn-45, Asn-51, Asn-60, Asn-85, Asn-93, Asn-102, Asn-123, Asn-129, Asn-138, Asn-180, Asn-201, Asn-207, Asn-216, Asn-258, Asn-279, Asn-285, Asn-319, Asn-327, Asn-336, Asn-357, Asn-363, Asn-372, Asn-397, Asn-405, Asn-413, Asn-434, and Asn-441. The tract at residues 80–114 (SKKDENITGQSEINTSAKSQPINSTRDGEDSGTDL) is disordered. Residues 86–104 (ITGQSEINTSAKSQPINST) are compositionally biased toward polar residues. A disordered region spans residues 314-358 (SKKDENVTGQSEINTSAKSQPINSTRDGEDSGTDLKNLLTDPANT). Polar residues predominate over residues 320–338 (VTGQSEINTSAKSQPINST). The interval 393 to 413 (RKDENVTGQSEFNISTNSNLN) is disordered. Residues 468–488 (YCIILITFQIVTVGMIIYLVF) form a helical membrane-spanning segment. The Cytoplasmic segment spans residues 489–515 (RTMRKPCQSERAIPLNTFGFGNNSSHE).

Belongs to the polydnaviridae Glc1.8 protein family.

The protein resides in the host membrane. Involved in suppression of the insect cellular immune response. Inhibits host hemocyte adhesion and phagocytosis. This chain is Mucin-like protein Glc1.8a (O9), found in Microplitis demolitor (Parasitoid wasp).